Reading from the N-terminus, the 567-residue chain is Zinc finger protein 512 (567 aa).

The disordered stretch occupies residues 1–32 (MSSRLGAVPATSGPTTFKQQRSTRIVGAKNSR). Over residues 12–23 (SGPTTFKQQRST) the composition is skewed to polar residues. Residues Lys-18 and Lys-84 each participate in a glycyl lysine isopeptide (Lys-Gly) (interchain with G-Cter in SUMO2) cross-link. Residues 86–148 (AATSHVEGSG…QARRIRKEPP (63 aa)) are disordered. Residues 119-130 (KKHKLYGRKQRP) are compositionally biased toward basic residues. The segment at 197-220 (FTCHHCGKQLRSLAGMKYHVMANH) adopts a C2H2-type 1 zinc-finger fold. Lys-227 participates in a covalent cross-link: Glycyl lysine isopeptide (Lys-Gly) (interchain with G-Cter in SUMO2). Residues 287–310 (LKCHHCGKPYRSKAGLAYHLRSEH) form a C2H2-type 2 zinc finger. Lys-333 is covalently cross-linked (Glycyl lysine isopeptide (Lys-Gly) (interchain with G-Cter in SUMO2)). Residues 406–430 (IQCPNQGCEAVYSSVSGLKAHLGSC) form a C2H2-type 3; atypical zinc finger. A C2H2-type 4 zinc finger spans residues 440-463 (YKCLLCQKEFVSESGVKYHINSVH). Positions 486–567 (QRQQEEEKRR…PKTNHKRGRK (82 aa)) are disordered. A compositionally biased stretch (basic residues) spans 495 to 508 (RQQHRSRRSLRRRQ). Basic and acidic residues predominate over residues 523 to 532 (VGKDQRRNNE). Over residues 556–567 (KPPKTNHKRGRK) the composition is skewed to basic residues.

This sequence belongs to the krueppel C2H2-type zinc-finger protein family.

The protein localises to the nucleus. May be involved in transcriptional regulation. This Pongo abelii (Sumatran orangutan) protein is Zinc finger protein 512 (ZNF512).